The chain runs to 132 residues: Large ribosomal subunit protein uL14 (132 aa).

The protein belongs to the universal ribosomal protein uL14 family. In terms of assembly, part of the 50S ribosomal subunit. Forms a cluster with proteins L3 and L24e, part of which may contact the 16S rRNA in 2 intersubunit bridges.

Functionally, binds to 23S rRNA. Forms part of two intersubunit bridges in the 70S ribosome. This is Large ribosomal subunit protein uL14 from Methanospirillum hungatei JF-1 (strain ATCC 27890 / DSM 864 / NBRC 100397 / JF-1).